A 220-amino-acid polypeptide reads, in one-letter code: Deoxyribose-phosphate aldolase (220 aa).

Aspartate 89 serves as the catalytic Proton donor/acceptor. The active-site Schiff-base intermediate with acetaldehyde is the lysine 151. The Proton donor/acceptor role is filled by lysine 180.

Belongs to the DeoC/FbaB aldolase family. DeoC type 1 subfamily.

Its subcellular location is the cytoplasm. It catalyses the reaction 2-deoxy-D-ribose 5-phosphate = D-glyceraldehyde 3-phosphate + acetaldehyde. It participates in carbohydrate degradation; 2-deoxy-D-ribose 1-phosphate degradation; D-glyceraldehyde 3-phosphate and acetaldehyde from 2-deoxy-alpha-D-ribose 1-phosphate: step 2/2. Functionally, catalyzes a reversible aldol reaction between acetaldehyde and D-glyceraldehyde 3-phosphate to generate 2-deoxy-D-ribose 5-phosphate. In Streptococcus pneumoniae serotype 2 (strain D39 / NCTC 7466), this protein is Deoxyribose-phosphate aldolase.